The primary structure comprises 659 residues: Zinc finger protein 304 (659 aa).

A KRAB domain is found at 14-88; the sequence is VTFEDVFVYF…TAESGLFQKA (75 aa). 16 consecutive C2H2-type zinc fingers follow at residues 89–111, 115–139, 251–273, 279–301, 307–329, 335–357, 363–385, 391–413, 419–441, 447–469, 475–497, 503–525, 531–553, 559–581, 587–609, and 615–637; these read HPCE…QGSH, KLCT…QKQH, FRCL…RKIH, HVCK…QKFH, YTCS…QRVH, YDCS…QRIH, YKCN…QRFH, YECS…WRIH, YECI…RRVH, YVCS…QIIH, YECS…QKIH, YECG…QRIH, YECN…QRVH, YVCS…KKVH, YECS…QRVH, and YVCS…QKAH.

It belongs to the krueppel C2H2-type zinc-finger protein family. As to quaternary structure, probably part of a corepressor complex containing ZNF304, TRIM28, SETDB1 and DNMT1; leading to promoter hypermethylation and transcriptional silencing. Probably associates with Polycomb group (PcG) complexes; leading to trimethylation of 'Lys-27' of histone H3 (H3K27me3). Interacts with USP28. Post-translationally, deubiquitinated by USP28; the deubiquitination leads to the stabilization of ZNF304 from proteolytic degradation. In terms of tissue distribution, expressed in undifferentiated embryonic stem cells (ESCs). Expressed strongly in colorectal cancers cells (CRCs). Expressed strongly in ovarian carcinoma (OC) tumor cell lines compared to non-transformed ovarian epithelial cells (at protein level). Expressed in lymphoid tissues, thyroid, adrenal gland, prostate, pancreas and skeletal muscles.

The protein localises to the nucleus. In terms of biological role, acts as a transcriptional regulator and plays a role in gene silencing. Probably forms a corepressor complex required for activated KRAS-mediated promoter hypermethylation and transcriptional silencing of several tumor suppressor genes (TSGs) or other tumor-related genes in colorectal cancer (CRC) cells. Also required to maintain a transcriptionally repressive state of genes in undifferentiated embryonic stem cells (ESCs) by inducing trimethylation of 'Lys-27' of histone H3 (H3K27me3) in a Polycomb group (PcG) complexes-dependent manner. Associates at promoter regions of TSGs and mediates the recruitment of the corepressor complex containing the scaffolding protein TRIM28, methyltransferase DNMT1 and histone methyltransferase SETDB1 and/or the PcG complexes at those sites. Transcription factor involved in the metastatic cascade process by inducing cell migration and proliferation and gain resistance to anoikis of ovarian carcinoma (OC) cells via integrin-mediated signaling pathways. Associates with the ITGB1 promoter and positively regulates beta-1 integrin transcription expression. Promotes angiogenesis. Promotes tumor growth. This is Zinc finger protein 304 from Homo sapiens (Human).